The sequence spans 414 residues: MNVNDFEIMAPVGSYESLMAAIKAGADSVYFGIEGLNMRARSANNFTTEDLYKIAEICRDKGVKSYLTVNTVIYDEDIALMRSVIDAAQKAQISAIIASDVAAMMYANEIGVEVHLSTQLNISNAEALRFYSRFADVVVLARELNMDQVRTIHETIVRDNICGPKGHPVRIEMFAHGALCMAVSGKCYLSLHEHNSSANRGACAQICRRGYTVKDKDSGLELDIENQYIMSPKDLKTIHFINKMMDAGVRVFKIEGRARGPEYVYTVCRCYKEAIEAYCNGTYDEEAIGRWDEQLATVFNRGFWDGYYLGQRLGEWTHRYGSGATRQKIYVGKGIKYFSRLGVAEFEIESGELHIGDEIVITGPTTGVIIQKVEEIRYELQTVEKATKGQRISIPVKEKVRPSDKLYRFDKREE.

Belongs to the peptidase U32 family. In terms of assembly, homodimer. Requires a metal cation as cofactor.

In terms of biological role, has collagenase activity. Hydrolyzes type I collagen. May play a role in virulence. This Porphyromonas gingivalis (strain ATCC BAA-308 / W83) protein is Collagenase (prtC).